The primary structure comprises 262 residues: Ribosomal RNA small subunit methyltransferase A (262 aa).

S-adenosyl-L-methionine-binding residues include Asn-13, Leu-15, Gly-40, Glu-61, Asp-85, and Asn-105.

It belongs to the class I-like SAM-binding methyltransferase superfamily. rRNA adenine N(6)-methyltransferase family. RsmA subfamily.

It is found in the cytoplasm. The catalysed reaction is adenosine(1518)/adenosine(1519) in 16S rRNA + 4 S-adenosyl-L-methionine = N(6)-dimethyladenosine(1518)/N(6)-dimethyladenosine(1519) in 16S rRNA + 4 S-adenosyl-L-homocysteine + 4 H(+). Functionally, specifically dimethylates two adjacent adenosines (A1518 and A1519) in the loop of a conserved hairpin near the 3'-end of 16S rRNA in the 30S particle. May play a critical role in biogenesis of 30S subunits. The protein is Ribosomal RNA small subunit methyltransferase A of Laribacter hongkongensis (strain HLHK9).